The following is a 697-amino-acid chain: T-related protein (697 aa).

The segment at 1-60 (MTTSHILSAVDPTTGLSGNVSGGGGGGGAGGGAGSGSPQHVTHNGHGHGHGLGGVAAVSG) is disordered. 2 stretches are compositionally biased toward gly residues: residues 20 to 35 (VSGG…GAGS) and 50 to 60 (HGLGGVAAVSG). A DNA-binding region (T-box) is located at residues 96–264 (LWLRFQNLTN…YNPFAKAFLD (169 aa)). Positions 316–330 (SVSSAESVGPSSGGS) are enriched in low complexity. Disordered stretches follow at residues 316-407 (SVSS…GGIG) and 462-488 (VCSG…TSSP). The span at 337-351 (SLSSRSVAPTRTTPY) shows a compositional bias: polar residues. 3 stretches are compositionally biased toward low complexity: residues 352-373 (SRPR…SSTS), 381-401 (QTPT…VSSS), and 469-488 (SSHN…TSSP).

Its subcellular location is the nucleus. Functionally, required for the specification of the hindgut and anal pads. The protein is T-related protein (byn) of Drosophila melanogaster (Fruit fly).